We begin with the raw amino-acid sequence, 440 residues long: Xylose isomerase (440 aa).

Active-site residues include His-101 and Asp-104. The Mg(2+) site is built by Glu-232, Glu-268, His-271, Asp-296, Asp-307, Asp-309, and Asp-339.

The protein belongs to the xylose isomerase family. As to quaternary structure, homotetramer. Mg(2+) is required as a cofactor.

The protein localises to the cytoplasm. The enzyme catalyses alpha-D-xylose = alpha-D-xylulofuranose. This is Xylose isomerase from Salmonella typhi.